We begin with the raw amino-acid sequence, 192 residues long: Secreted phosphoprotein 24 (192 aa).

The first 29 residues, 1–29 (MGKTPEDFERHTMRSLIFVLALSVFTCSG), serve as a signal peptide directing secretion. Disulfide bonds link cysteine 92-cysteine 103 and cysteine 116-cysteine 134. The disordered stretch occupies residues 155–192 (TDPRKRGSSRSEAFSSRGRGHSNGDWRKPDYTSPGKVE).

It belongs to the SPP2 family. In terms of processing, multiply phosphorylated at serine residues.

Its subcellular location is the secreted. In terms of biological role, could coordinate an aspect of bone turnover. The polypeptide is Secreted phosphoprotein 24 (SPP2) (Gallus gallus (Chicken)).